We begin with the raw amino-acid sequence, 445 residues long: Ribosomal protein uS12 methylthiotransferase RimO (445 aa).

In terms of domain architecture, MTTase N-terminal spans 11-121; it reads PKISFVSLGC…VLDAVHRASP (111 aa). [4Fe-4S] cluster contacts are provided by Cys20, Cys56, Cys85, Cys152, Cys156, and Cys159. The Radical SAM core domain maps to 138–375; the sequence is LTPRHYAYLK…MARQQKISAR (238 aa). In terms of domain architecture, TRAM spans 378-444; sequence KRKVGTRQQI…EYDLHGTVAG (67 aa).

Belongs to the methylthiotransferase family. RimO subfamily. It depends on [4Fe-4S] cluster as a cofactor.

It localises to the cytoplasm. It carries out the reaction L-aspartate(89)-[ribosomal protein uS12]-hydrogen + (sulfur carrier)-SH + AH2 + 2 S-adenosyl-L-methionine = 3-methylsulfanyl-L-aspartate(89)-[ribosomal protein uS12]-hydrogen + (sulfur carrier)-H + 5'-deoxyadenosine + L-methionine + A + S-adenosyl-L-homocysteine + 2 H(+). In terms of biological role, catalyzes the methylthiolation of an aspartic acid residue of ribosomal protein uS12. The chain is Ribosomal protein uS12 methylthiotransferase RimO from Bradyrhizobium sp. (strain ORS 278).